We begin with the raw amino-acid sequence, 544 residues long: Membrane protein insertase YidC (544 aa).

Transmembrane regions (helical) follow at residues 6–26 (NILLIGLLFVSFLLWQQWQTD), 345–365 (LLMFFQSIVGNWGAAIILITL), 423–443 (GGCLPILLQMPIFIALYWVLL), 460–480 (LSVQDPYYVMPILMGVSMFVM), and 503–523 (VVFTVFFLWFPAGLVLYWLVG).

It belongs to the OXA1/ALB3/YidC family. Type 1 subfamily. In terms of assembly, interacts with the Sec translocase complex via SecD. Specifically interacts with transmembrane segments of nascent integral membrane proteins during membrane integration.

The protein localises to the cell inner membrane. Its function is as follows. Required for the insertion and/or proper folding and/or complex formation of integral membrane proteins into the membrane. Involved in integration of membrane proteins that insert both dependently and independently of the Sec translocase complex, as well as at least some lipoproteins. Aids folding of multispanning membrane proteins. The protein is Membrane protein insertase YidC of Shewanella woodyi (strain ATCC 51908 / MS32).